A 102-amino-acid polypeptide reads, in one-letter code: Small ribosomal subunit protein bS18c (102 aa).

The segment covering 1 to 19 (MDKTKRPLRKSKRSFRRRL) has biased composition (basic residues). The interval 1 to 26 (MDKTKRPLRKSKRSFRRRLPPPIGSG) is disordered.

Belongs to the bacterial ribosomal protein bS18 family. Part of the 30S ribosomal subunit.

The protein localises to the plastid. Its subcellular location is the chloroplast. The protein is Small ribosomal subunit protein bS18c of Piper cenocladum (Ant piper).